We begin with the raw amino-acid sequence, 221 residues long: MWGASRGRVAGPTLLGLLLALSVRSGGASKASAGLVTCGSVLKLLNTHHKVRLHSHDIKYGSGSGQQSVTGVEESDDANSYWRIRGGSEGGCPRGLPVRCGQAVRLTHVLTGKNLHTHHFPSPLSNNQEVSAFGEDGEGDDLDLWTVRCSGQHWEREASVRFQHVGTSVFLSVTGEQYGNPIRGQHEVHGMPSANAHNTWKAMEGIFIKPGADLSTGHDEL.

A signal peptide spans 1 to 28; the sequence is MWGASRGRVAGPTLLGLLLALSVRSGGA. MIR domains lie at 33–87, 95–150, and 151–205; these read AGLV…IRGG, GLPV…VRCS, and GQHW…AMEG. Ser-215 is modified (phosphoserine). Positions 218–221 match the Prevents secretion from ER motif; it reads HDEL.

Ubiquitously expressed with high expression in the testis, ovary, uterus, and low expression in heart and skeletal muscle.

The protein localises to the endoplasmic reticulum lumen. This Mus musculus (Mouse) protein is Stromal cell-derived factor 2-like protein 1 (Sdf2l1).